A 51-amino-acid polypeptide reads, in one-letter code: Sperm protamine P1 (51 aa).

2 disulfides stabilise this stretch: cysteine 7–cysteine 15 and cysteine 38–cysteine 48.

It belongs to the protamine P1 family. As to quaternary structure, cross-linked by interchain disulfide bonds around the DNA-helix. Phosphorylated by SRPK1. Testis.

It is found in the nucleus. The protein localises to the chromosome. Protamines substitute for histones in the chromatin of sperm during the haploid phase of spermatogenesis. They compact sperm DNA into a highly condensed, stable and inactive complex. This is Sperm protamine P1 (Prm1) from Rattus norvegicus (Rat).